The primary structure comprises 175 residues: ATP-dependent protease subunit HslV (175 aa).

T2 is a catalytic residue. 3 residues coordinate Na(+): G158, C161, and T164.

This sequence belongs to the peptidase T1B family. HslV subfamily. A double ring-shaped homohexamer of HslV is capped on each side by a ring-shaped HslU homohexamer. The assembly of the HslU/HslV complex is dependent on binding of ATP.

It localises to the cytoplasm. It catalyses the reaction ATP-dependent cleavage of peptide bonds with broad specificity.. With respect to regulation, allosterically activated by HslU binding. Its function is as follows. Protease subunit of a proteasome-like degradation complex believed to be a general protein degrading machinery. The sequence is that of ATP-dependent protease subunit HslV from Haemophilus influenzae (strain ATCC 51907 / DSM 11121 / KW20 / Rd).